Here is a 366-residue protein sequence, read N- to C-terminus: Histidinol-phosphate aminotransferase (366 aa).

Lys228 carries the post-translational modification N6-(pyridoxal phosphate)lysine.

It belongs to the class-II pyridoxal-phosphate-dependent aminotransferase family. Histidinol-phosphate aminotransferase subfamily. Homodimer. It depends on pyridoxal 5'-phosphate as a cofactor.

It catalyses the reaction L-histidinol phosphate + 2-oxoglutarate = 3-(imidazol-4-yl)-2-oxopropyl phosphate + L-glutamate. It participates in amino-acid biosynthesis; L-histidine biosynthesis; L-histidine from 5-phospho-alpha-D-ribose 1-diphosphate: step 7/9. In Corynebacterium glutamicum (strain ATCC 13032 / DSM 20300 / JCM 1318 / BCRC 11384 / CCUG 27702 / LMG 3730 / NBRC 12168 / NCIMB 10025 / NRRL B-2784 / 534), this protein is Histidinol-phosphate aminotransferase.